The primary structure comprises 202 residues: MTRFVVTGTDTGIGKTIFSASLARATGTPYWKPVQSGLEEETDSEIVARLAGVPVRPEAYRLVTPASPHIAAEIDGVAIDIERLTPPPGELIVEGAGGALVPVTRRTLYAELFARWQVPVIVCARTSLGTINHSLLTIEALKRRDVPIHGVVFIGDAVEDSEAIIADVSGVRRLGRLPVVAPLTSENLAAAFGANFDIADFR.

12–17 (GIGKTI) provides a ligand contact to ATP. Residue T16 coordinates Mg(2+). The active site involves K32. S36 lines the substrate pocket. Residues D43, 94-97 (EGAG), and 178-180 (PVV) each bind ATP. Residues D43 and E94 each contribute to the Mg(2+) site.

It belongs to the dethiobiotin synthetase family. Homodimer. Mg(2+) is required as a cofactor.

It is found in the cytoplasm. It carries out the reaction (7R,8S)-7,8-diammoniononanoate + CO2 + ATP = (4R,5S)-dethiobiotin + ADP + phosphate + 3 H(+). It participates in cofactor biosynthesis; biotin biosynthesis; biotin from 7,8-diaminononanoate: step 1/2. Catalyzes a mechanistically unusual reaction, the ATP-dependent insertion of CO2 between the N7 and N8 nitrogen atoms of 7,8-diaminopelargonic acid (DAPA, also called 7,8-diammoniononanoate) to form a ureido ring. The sequence is that of ATP-dependent dethiobiotin synthetase BioD from Sphingopyxis alaskensis (strain DSM 13593 / LMG 18877 / RB2256) (Sphingomonas alaskensis).